Here is a 149-residue protein sequence, read N- to C-terminus: Calmodulin (149 aa).

Position 2 is an N-acetylalanine (A2). 4 consecutive EF-hand domains span residues 8–43 (EQIAEFKEAFSLFDKDGDGTITTKELGTVMRSLGQN), 44–79 (PTEAELQDMINEVDADGDGTIDFPEFLTMMARKMKD), 81–116 (DSEEEIREAFRVFDKDGNGFISAAELRHVMTNLGEK), and 117–149 (LTDEEVDEMIREADIDGDGQVNYEEFVTMMTSK). Positions 21, 23, 25, 27, 32, 57, 59, 61, 63, 68, 94, 96, 98, and 105 each coordinate Ca(2+). K116 carries the post-translational modification N6,N6,N6-trimethyllysine. Ca(2+) is bound by residues D130, D132, D134, Q136, and E141.

The protein belongs to the calmodulin family.

Its function is as follows. Calmodulin mediates the control of a large number of enzymes, ion channels and other proteins by Ca(2+). Among the enzymes to be stimulated by the calmodulin-Ca(2+) complex are a number of protein kinases and phosphatases. This Pyuridae sp. (Sea squirt) protein is Calmodulin.